Reading from the N-terminus, the 81-residue chain is High-potential iron-sulfur protein (81 aa).

[4Fe-4S] cluster-binding residues include cysteine 43, cysteine 46, cysteine 59, and cysteine 73.

Belongs to the high-potential iron-sulfur protein (HiPIP) family. As to quaternary structure, homodimer.

Its subcellular location is the periplasm. Specific class of high-redox-potential 4Fe-4S ferredoxins. Functions in anaerobic electron transport in most purple and in some other photosynthetic bacteria and in at least one genus (Paracoccus) of halophilic, denitrifying bacteria. The chain is High-potential iron-sulfur protein from Halochromatium salexigens (Chromatium salexigens).